The sequence spans 278 residues: Putative peptidase Cgl1093 (278 aa).

The first 32 residues, Met1–Ala32, serve as a signal peptide directing secretion. Positions Leu33 to Gly236 constitute a Peptidase S1 domain. Cys59 and Cys75 form a disulfide bridge. Active-site charge relay system residues include His74, Asp123, and Ser189.

This sequence belongs to the peptidase S1 family.

It is found in the secreted. This is Putative peptidase Cgl1093 from Corynebacterium glutamicum (strain ATCC 13032 / DSM 20300 / JCM 1318 / BCRC 11384 / CCUG 27702 / LMG 3730 / NBRC 12168 / NCIMB 10025 / NRRL B-2784 / 534).